The following is a 464-amino-acid chain: Tyrosine aminotransferase (464 aa).

Lysine 284 is subject to N6-(pyridoxal phosphate)lysine.

The protein belongs to the class-I pyridoxal-phosphate-dependent aminotransferase family. Homodimer. It depends on pyridoxal 5'-phosphate as a cofactor. Expressed in the muscle. Expressed in the hypodermis and intestine.

It carries out the reaction L-tyrosine + 2-oxoglutarate = 3-(4-hydroxyphenyl)pyruvate + L-glutamate. The catalysed reaction is 3-hydroxy-L-phenylalanine + 2-oxoglutarate = 3-(3-hydroxyphenyl)pyruvate + L-glutamate. It functions in the pathway amino-acid degradation; L-phenylalanine degradation; acetoacetate and fumarate from L-phenylalanine: step 2/6. Transaminase involved in tyrosine breakdown. Converts tyrosine to p-hydroxyphenylpyruvate. Has no transaminase activity towards phenylalanine. Plays protective role against oxidative stress, metabolizing meta-tyrosine and negatively regulating its accumulation. Plays a role in modulating the daf-2/insulin receptor-like transduction pathway through regulating tyrosine levels. Negatively regulates dauer formation. Plays a role in longevity. In Caenorhabditis elegans, this protein is Tyrosine aminotransferase.